Reading from the N-terminus, the 278-residue chain is Formamidopyrimidine-DNA glycosylase (278 aa).

The active-site Schiff-base intermediate with DNA is Pro2. Glu3 (proton donor) is an active-site residue. Lys59 functions as the Proton donor; for beta-elimination activity in the catalytic mechanism. DNA is bound by residues His94, Arg113, and Lys154. The segment at 239 to 273 (KVHTKKGEFCIKCSSKIEKIKFKGRGTYFCPTCQK) adopts an FPG-type zinc-finger fold. Arg263 (proton donor; for delta-elimination activity) is an active-site residue.

The protein belongs to the FPG family. As to quaternary structure, monomer. Zn(2+) is required as a cofactor.

The enzyme catalyses Hydrolysis of DNA containing ring-opened 7-methylguanine residues, releasing 2,6-diamino-4-hydroxy-5-(N-methyl)formamidopyrimidine.. It carries out the reaction 2'-deoxyribonucleotide-(2'-deoxyribose 5'-phosphate)-2'-deoxyribonucleotide-DNA = a 3'-end 2'-deoxyribonucleotide-(2,3-dehydro-2,3-deoxyribose 5'-phosphate)-DNA + a 5'-end 5'-phospho-2'-deoxyribonucleoside-DNA + H(+). Involved in base excision repair of DNA damaged by oxidation or by mutagenic agents. Acts as a DNA glycosylase that recognizes and removes damaged bases. Has a preference for oxidized purines, such as 7,8-dihydro-8-oxoguanine (8-oxoG). Has AP (apurinic/apyrimidinic) lyase activity and introduces nicks in the DNA strand. Cleaves the DNA backbone by beta-delta elimination to generate a single-strand break at the site of the removed base with both 3'- and 5'-phosphates. This is Formamidopyrimidine-DNA glycosylase (mutM) from Mycoplasmopsis pulmonis (strain UAB CTIP) (Mycoplasma pulmonis).